A 208-amino-acid polypeptide reads, in one-letter code: NADH-ubiquinone oxidoreductase chain 4 (208 aa).

6 helical membrane passes run 23–43, 60–80, 93–113, 114–134, 147–167, and 185–205; these read VWINVTTYSLLINLISINLLW, PLSAPLLVLTTWLLPLMLLAS, KLYISLLVCLQTLLIMTFSAN, ELIMFYILFEATLIPTLIIIT, IYFLFYTLVGSIPLLIALIYI, and PINQTWSNNILWLACIMAFMV.

It belongs to the complex I subunit 4 family. In terms of assembly, core subunit of respiratory chain NADH dehydrogenase (Complex I) which is composed of 45 different subunits.

The protein resides in the mitochondrion inner membrane. It catalyses the reaction a ubiquinone + NADH + 5 H(+)(in) = a ubiquinol + NAD(+) + 4 H(+)(out). In terms of biological role, core subunit of the mitochondrial membrane respiratory chain NADH dehydrogenase (Complex I) which catalyzes electron transfer from NADH through the respiratory chain, using ubiquinone as an electron acceptor. Essential for the catalytic activity and assembly of complex I. The chain is NADH-ubiquinone oxidoreductase chain 4 (MT-ND4) from Microtus pennsylvanicus (Meadow vole).